A 118-amino-acid chain; its full sequence is Small ribosomal subunit protein uS13 (118 aa).

The interval 93–118 (RNLPVRGQNTKNNARTRKGPTRPLKR) is disordered. Over residues 106-118 (ARTRKGPTRPLKR) the composition is skewed to basic residues.

The protein belongs to the universal ribosomal protein uS13 family. In terms of assembly, part of the 30S ribosomal subunit. Forms a loose heterodimer with protein S19. Forms two bridges to the 50S subunit in the 70S ribosome.

Located at the top of the head of the 30S subunit, it contacts several helices of the 16S rRNA. In the 70S ribosome it contacts the 23S rRNA (bridge B1a) and protein L5 of the 50S subunit (bridge B1b), connecting the 2 subunits; these bridges are implicated in subunit movement. Contacts the tRNAs in the A and P-sites. The chain is Small ribosomal subunit protein uS13 from Psychrobacter cryohalolentis (strain ATCC BAA-1226 / DSM 17306 / VKM B-2378 / K5).